We begin with the raw amino-acid sequence, 524 residues long: 2-isopropylmalate synthase (524 aa).

The Pyruvate carboxyltransferase domain maps to 15-275 (VVVFDTTMRD…PYGTSVDPVH (261 aa)). 4 residues coordinate Mn(2+): aspartate 24, histidine 212, histidine 214, and asparagine 248. The segment at 401–524 (RVSRLRVVAG…RPEAAIASGF (124 aa)) is regulatory domain.

The protein belongs to the alpha-IPM synthase/homocitrate synthase family. LeuA type 1 subfamily. In terms of assembly, homodimer. Requires Mn(2+) as cofactor.

It is found in the cytoplasm. It carries out the reaction 3-methyl-2-oxobutanoate + acetyl-CoA + H2O = (2S)-2-isopropylmalate + CoA + H(+). The protein operates within amino-acid biosynthesis; L-leucine biosynthesis; L-leucine from 3-methyl-2-oxobutanoate: step 1/4. Functionally, catalyzes the condensation of the acetyl group of acetyl-CoA with 3-methyl-2-oxobutanoate (2-ketoisovalerate) to form 3-carboxy-3-hydroxy-4-methylpentanoate (2-isopropylmalate). This is 2-isopropylmalate synthase from Caulobacter vibrioides (strain ATCC 19089 / CIP 103742 / CB 15) (Caulobacter crescentus).